A 406-amino-acid chain; its full sequence is ESX-5 secretion system protein EccE5 (406 aa).

2 consecutive transmembrane segments (helical) span residues 9 to 29 (LALS…ILAV) and 43 to 63 (VAWW…VVSY).

The protein belongs to the EccE family. Part of the ESX-5 / type VII secretion system (T7SS), which is composed of cytosolic and membrane components. The ESX-5 membrane complex is composed of EccB5, EccC5, EccD5 and EccE5.

The protein localises to the cell inner membrane. Its function is as follows. Part of the ESX-5 specialized secretion system, which is responsible for the secretion of EsxN and a number of PE_PGRS and PPE proteins, including PPE41. In Mycobacterium tuberculosis (strain ATCC 25618 / H37Rv), this protein is ESX-5 secretion system protein EccE5.